The primary structure comprises 753 residues: Polyadenylate-binding protein, cytoplasmic and nuclear (753 aa).

Low complexity predominate over residues 1–43 (MSAEASTTPAAETPVNGTPETSTTPAAPAAEATAAETAAPSTS). Residues 1–49 (MSAEASTTPAAETPVNGTPETSTTPAAPAAEATAAETAAPSTSQPHSAS) are disordered. RRM domains lie at 48–126 (ASLY…WSQR), 136–213 (GNVF…HHIS), 229–306 (TNVY…RAQK), and 332–460 (VNLY…LAQR). 3 disordered regions span residues 363–417 (VMRD…SDKK), 607–649 (RGPG…PAAG), and 727–753 (GTEG…ENKS). Positions 376–417 (DSDKEKKEESKEEKPEAAEKTEEAAKESGDDQDKENKKSDKK) are enriched in basic and acidic residues. Gly residues predominate over residues 607 to 619 (RGPGYGQGRGGVP). A compositionally biased stretch (low complexity) spans 633–649 (QNAQPAAGRGEEAPAAG). The 78-residue stretch at 647 to 724 (AAGLTAQSLA…ALSVYDEYMK (78 aa)) folds into the PABC domain. Basic and acidic residues predominate over residues 737–753 (PKPKEAATEESTEENKS).

The protein belongs to the polyadenylate-binding protein type-1 family.

The protein resides in the cytoplasm. Its subcellular location is the nucleus. Binds the poly(A) tail of mRNA. Appears to be an important mediator of the multiple roles of the poly(A) tail in mRNA biogenesis, stability and translation. In the nucleus, involved in both mRNA cleavage and polyadenylation. Is also required for efficient mRNA export to the cytoplasm. Acts in concert with a poly(A)-specific nuclease (PAN) to affect poly(A) tail shortening, which may occur concomitantly with either nucleocytoplasmic mRNA transport or translational initiation. In the cytoplasm, stimulates translation initiation and regulates mRNA decay through translation termination-coupled poly(A) shortening, probably mediated by PAN. The polypeptide is Polyadenylate-binding protein, cytoplasmic and nuclear (pab1) (Aspergillus terreus (strain NIH 2624 / FGSC A1156)).